The chain runs to 195 residues: Holliday junction branch migration complex subunit RuvA (195 aa).

Positions 1–64 (MIGRIAGLLL…EDAHLLFGFM (64 aa)) are domain I. Residues 65–140 (TEPERVLFRQ…KISPAITLPE (76 aa)) are domain II. The tract at residues 140–144 (ETGTA) is flexible linker. The segment at 145 to 195 (MASSTDKDILNALSALGYNDREANWAVGQLSEGVTVSDGIMQSLRLLSKAK) is domain III.

It belongs to the RuvA family. Homotetramer. Forms an RuvA(8)-RuvB(12)-Holliday junction (HJ) complex. HJ DNA is sandwiched between 2 RuvA tetramers; dsDNA enters through RuvA and exits via RuvB. An RuvB hexamer assembles on each DNA strand where it exits the tetramer. Each RuvB hexamer is contacted by two RuvA subunits (via domain III) on 2 adjacent RuvB subunits; this complex drives branch migration. In the full resolvosome a probable DNA-RuvA(4)-RuvB(12)-RuvC(2) complex forms which resolves the HJ.

It is found in the cytoplasm. Functionally, the RuvA-RuvB-RuvC complex processes Holliday junction (HJ) DNA during genetic recombination and DNA repair, while the RuvA-RuvB complex plays an important role in the rescue of blocked DNA replication forks via replication fork reversal (RFR). RuvA specifically binds to HJ cruciform DNA, conferring on it an open structure. The RuvB hexamer acts as an ATP-dependent pump, pulling dsDNA into and through the RuvAB complex. HJ branch migration allows RuvC to scan DNA until it finds its consensus sequence, where it cleaves and resolves the cruciform DNA. This is Holliday junction branch migration complex subunit RuvA from Nitrosomonas europaea (strain ATCC 19718 / CIP 103999 / KCTC 2705 / NBRC 14298).